The following is a 140-amino-acid chain: uncharacterized protein (140 aa).

The disordered stretch occupies residues 121-140 (EEVKNGELIDPNVTTEDEKL).

This is an uncharacterized protein from Schizosaccharomyces pombe (strain 972 / ATCC 24843) (Fission yeast).